The sequence spans 828 residues: Periplasmic nitrate reductase 1 (828 aa).

The tat-type signal signal peptide spans Met1 to Ala30. The 4Fe-4S Mo/W bis-MGD-type domain maps to Ile41–Asp97. Cys48, Cys51, Cys55, and Cys83 together coordinate [4Fe-4S] cluster. Residues Lys85, Gln152, Asn177, Cys181, Trp214–Met221, Ser245–His249, Gln264–Asp266, Met374, Gln378, Asn484, Ser510–Asp511, Lys533, Asp560, and Thr718–Thr727 each bind Mo-bis(molybdopterin guanine dinucleotide). Substrate is bound at residue Phe794. Mo-bis(molybdopterin guanine dinucleotide) is bound by residues Asn802 and Lys819.

The protein belongs to the prokaryotic molybdopterin-containing oxidoreductase family. NasA/NapA/NarB subfamily. Component of the periplasmic nitrate reductase NapAB complex composed of NapA and NapB. [4Fe-4S] cluster serves as cofactor. Requires Mo-bis(molybdopterin guanine dinucleotide) as cofactor. Predicted to be exported by the Tat system. The position of the signal peptide cleavage has not been experimentally proven.

The protein localises to the periplasm. It carries out the reaction 2 Fe(II)-[cytochrome] + nitrate + 2 H(+) = 2 Fe(III)-[cytochrome] + nitrite + H2O. Its function is as follows. Catalytic subunit of the periplasmic nitrate reductase complex NapAB. Receives electrons from NapB and catalyzes the reduction of nitrate to nitrite. The sequence is that of Periplasmic nitrate reductase 1 from Photobacterium profundum (strain SS9).